The chain runs to 356 residues: Tyrosine recombinase XerS (356 aa).

The Core-binding (CB) domain occupies 16–121; the sequence is TMPWYILEYY…ALSSLYKYLT (106 aa). Positions 169–354 constitute a Tyr recombinase domain; sequence EFLQYIDTEY…VNDEQKNALD (186 aa). Residues Arg-210, Lys-234, His-306, Arg-309, and His-332 contribute to the active site. The active-site O-(3'-phospho-DNA)-tyrosine intermediate is the Tyr-341.

This sequence belongs to the 'phage' integrase family. XerS subfamily.

It localises to the cytoplasm. With respect to regulation, ftsK is required for recombination. Its function is as follows. Site-specific tyrosine recombinase, which acts by catalyzing the cutting and rejoining of the recombining DNA molecules. Essential to convert dimers of the bacterial chromosome into monomers to permit their segregation at cell division. The chain is Tyrosine recombinase XerS from Streptococcus sanguinis (strain SK36).